Here is a 47-residue protein sequence, read N- to C-terminus: Conotoxin Cal6.18 (47 aa).

The N-terminal stretch at 1-19 (MKLTYVLIVAMLVLVVCRA) is a signal peptide.

It belongs to the conotoxin O1 superfamily. Post-translationally, may contain 3 disulfide bonds. Expressed by the venom duct.

The protein resides in the secreted. In terms of biological role, probable neurotoxin. The sequence is that of Conotoxin Cal6.18 from Californiconus californicus (California cone).